Here is a 546-residue protein sequence, read N- to C-terminus: uncharacterized protein (546 aa).

Transmembrane regions (helical) follow at residues 106–126, 145–165, 172–192, 231–251, 263–283, 332–352, 375–395, 416–436, 444–464, and 510–530; these read WWIV…SSVY, TLGS…FAPL, FIIY…GGCA, YVLP…PIIG, WTFW…FIFF, LIFT…VYII, GLSF…TPFI, LYPL…FAWT, WIVP…VFFV, and WATS…FIFY.

This sequence belongs to the major facilitator superfamily. CAR1 family.

It localises to the endoplasmic reticulum membrane. This is an uncharacterized protein from Schizosaccharomyces pombe (strain 972 / ATCC 24843) (Fission yeast).